The following is a 200-amino-acid chain: 3-isopropylmalate dehydratase small subunit (200 aa).

This sequence belongs to the LeuD family. LeuD type 1 subfamily. Heterodimer of LeuC and LeuD.

It carries out the reaction (2R,3S)-3-isopropylmalate = (2S)-2-isopropylmalate. It functions in the pathway amino-acid biosynthesis; L-leucine biosynthesis; L-leucine from 3-methyl-2-oxobutanoate: step 2/4. In terms of biological role, catalyzes the isomerization between 2-isopropylmalate and 3-isopropylmalate, via the formation of 2-isopropylmaleate. This is 3-isopropylmalate dehydratase small subunit from Campylobacter jejuni subsp. doylei (strain ATCC BAA-1458 / RM4099 / 269.97).